The primary structure comprises 512 residues: MFEIRDVDLAGRIGRIYTQHGVVETPAFFPVIDVYRQEVSVDEVRAAGFGQVITNAYLLWKRFGWEAAEKGVHRILGFPGVVMTDSGAYQILEYGGVELSQGEVVEYQKRLGSDIAVILDIPTGDVGRREAEESVRETIRRALEARVMIEGDERIWVYPVQGGRYFDLVEESARVGGRLGFYRMYGIGSPTVFLERYMYHVVVEAVYRAKKHLPWGRPVHLFGAGHPLIFPYAVALGVDTFDSASYILYAREGRYITEYGVYRIEDLDYLPCSCPVCSRYTPQELREMDRVERTRLLALHNLYVISASMRRVKQAIREGRLWELLEETSRKHPSTARVMARMRRYIDALEKGSARGRGVVRGVRAYGLESLSNPRLSRFSSDAARLVEAMAEKWGGGKAVLKPLDPKPEPGQCESMVGGGEWILFYQPFLGVFPVEACGAYPSLQIDYPQEGLPAEVIGDLASKIASTVSILRGRGFTVRLEYCGKVEWQARAVEALKTAAAGDLPTVEACG.

The Nucleophile role is filled by Asp-85. Position 120 (Asp-120) interacts with substrate. 3 residues coordinate Zn(2+): Cys-272, Cys-274, and Cys-277.

The protein belongs to the archaeosine tRNA-ribosyltransferase family. Zn(2+) serves as cofactor.

It carries out the reaction guanosine(15) in tRNA + 7-cyano-7-deazaguanine = 7-cyano-7-carbaguanosine(15) in tRNA + guanine. It functions in the pathway tRNA modification; archaeosine-tRNA biosynthesis. Functionally, exchanges the guanine residue with 7-cyano-7-deazaguanine (preQ0) at position 15 in the dihydrouridine loop (D-loop) of archaeal tRNAs. In Aeropyrum pernix (strain ATCC 700893 / DSM 11879 / JCM 9820 / NBRC 100138 / K1), this protein is tRNA-guanine(15) transglycosylase.